Here is a 362-residue protein sequence, read N- to C-terminus: Innexin inx1 (362 aa).

Residues 1 to 28 are Cytoplasmic-facing; the sequence is MYKLLGSLKSYLKWQDIQTDNAVFRLHN. The helical transmembrane segment at 29–49 threads the bilayer; the sequence is SFTTVLLLTCSLIITATQYVG. Residues 50-110 are Extracellular-facing; the sequence is QPISCIVNGV…DAKKYYTYYQ (61 aa). A helical membrane pass occupies residues 111-131; that stretch reads WVCFVLFFQAMACYTPKFLWN. Residues 132–177 are Cytoplasmic-facing; that stretch reads KFEGGLMRMIVMGLNITICTREEKEAKRDALLDYLIKHVKRHKLYA. A helical transmembrane segment spans residues 178–198; that stretch reads IRYWACEFLCCINIIVQMYLM. The Extracellular portion of the chain corresponds to 199–267; that stretch reads NRFFDGEFLS…LPLNIVNEKT (69 aa). A helical membrane pass occupies residues 268-288; that stretch reads YVFIWFWFWILLVLLIGLIVF. The Cytoplasmic segment spans residues 289-362; sequence RGCIIFMPKF…VEPSKHDRAK (74 aa).

The protein belongs to the pannexin family. As to quaternary structure, heterooligomer of Inx2 and ogre. In terms of tissue distribution, in ovary, expressed in follicle cells. Expressed around the periphery of the embryo during cellular blastoderm formation. Repeating epidermal pattern emerges from stage 11, high levels of expression detected along the borders of each segment from stage 13. At stage 13, expressed in the dorsal branch of the tracheal system. During stage 15, detected in a few cells at each of the branch points of the dorsal trunk and at low levels in cardioblasts. In embryos, also expressed in the salivary gland and the hindgut (at protein level). At stage 17, expressed in the dorsal side of the CNS. Expressed in the imaginal wing disk. Expressed in larval CNS and in tissues outside of the CNS. In pupae, expressed in the CNS and in primary, secondary and tertiary pigment cells of the retina.

The protein resides in the cell membrane. Its subcellular location is the cell junction. It is found in the gap junction. It localises to the basolateral cell membrane. Structural component of the gap junctions. Essential for generation and/or maintenance of postembryonic neuroblasts and normal development of optic lobe. The sequence is that of Innexin inx1 (ogre) from Drosophila melanogaster (Fruit fly).